The primary structure comprises 756 residues: Zinc finger and BTB domain-containing protein 49 (756 aa).

The region spanning 25–91 (CDCMLVVRGV…MYTSRLDLNQ (67 aa)) is the BTB domain. Disordered stretches follow at residues 176–197 (APSANFSRPTEVSKPDAAGGSC), 226–290 (PSQV…LSEP), and 311–379 (SQQS…PSQA). The segment covering 226 to 242 (PSQVPATQQPLTRSAST) has biased composition (polar residues). Composition is skewed to basic and acidic residues over residues 319 to 341 (SHPEPDNGLARREESAAKEDAVE) and 348 to 365 (AEEKGRGELGPESSREEE). 7 consecutive C2H2-type zinc fingers follow at residues 386–408 (YACELCGKPFKHPSNLELHKRSH), 414–436 (FECNICGKHFSQAGNLQTHLRRH), 442–464 (YICEICGKRFAASGDVQRHIIIH), 470–492 (HLCDTCGRGFSNFSNLKEHKKTH), 498–520 (FTCDECGKSFNMQRKLVKHRVRH), 526–548 (YSCPACGKCFGGSGDLRRHVRTH), and 554–576 (YSCEVCSKCFTRSAVLRRHKRMH).

This sequence belongs to the krueppel C2H2-type zinc-finger protein family. Interacts with EP300, KAT5/Tip60 and ZBTB17. The interaction with EP300 is direct and leads to synergistic induction of CDKN1A. On the CDKN1A promoter, forms a complex with ZBTB17; this interaction leads to additive CDKN1A transactivation. The interaction with ZBTB17 may block ZBTB17 repressor activity. As to expression, widely expressed, with highest levels in white adipose tissue and kidney, intermediate levels in brain, liver and heart, and lowest levels in spleen, brown adipose tissue and muscle.

The protein resides in the cytoplasm. It localises to the nucleus. Functionally, transcription factor. Inhibits cell proliferation by activating either CDKN1A/p21 transcription or RB1 transcription. The polypeptide is Zinc finger and BTB domain-containing protein 49 (Zbtb49) (Mus musculus (Mouse)).